We begin with the raw amino-acid sequence, 470 residues long: ATP synthase subunit beta (470 aa).

157–164 (GGAGVGKT) contacts ATP.

Belongs to the ATPase alpha/beta chains family. As to quaternary structure, F-type ATPases have 2 components, CF(1) - the catalytic core - and CF(0) - the membrane proton channel. CF(1) has five subunits: alpha(3), beta(3), gamma(1), delta(1), epsilon(1). CF(0) has three main subunits: a(1), b(2) and c(9-12). The alpha and beta chains form an alternating ring which encloses part of the gamma chain. CF(1) is attached to CF(0) by a central stalk formed by the gamma and epsilon chains, while a peripheral stalk is formed by the delta and b chains.

It is found in the cell inner membrane. It catalyses the reaction ATP + H2O + 4 H(+)(in) = ADP + phosphate + 5 H(+)(out). Functionally, produces ATP from ADP in the presence of a proton gradient across the membrane. The catalytic sites are hosted primarily by the beta subunits. The chain is ATP synthase subunit beta from Geobacter sulfurreducens (strain ATCC 51573 / DSM 12127 / PCA).